The sequence spans 944 residues: UvrABC system protein A (944 aa).

33 to 40 (GLSGSGKS) contacts ATP. The segment at 252 to 279 (CPICGFSIGELEPRMFSFNSPFGACPTC) adopts a C4-type zinc-finger fold. 2 ABC transporter domains span residues 309–587 (WEPT…KKSL) and 607–935 (ITDR…QYLK). 639-646 (GVSGSGKS) is an ATP binding site. The segment at 738-764 (CEACKGDGIIKIEMHFLPDVYVPCEVC) adopts a C4-type zinc-finger fold.

It belongs to the ABC transporter superfamily. UvrA family. Forms a heterotetramer with UvrB during the search for lesions.

The protein localises to the cytoplasm. Its function is as follows. The UvrABC repair system catalyzes the recognition and processing of DNA lesions. UvrA is an ATPase and a DNA-binding protein. A damage recognition complex composed of 2 UvrA and 2 UvrB subunits scans DNA for abnormalities. When the presence of a lesion has been verified by UvrB, the UvrA molecules dissociate. This is UvrABC system protein A from Staphylococcus epidermidis (strain ATCC 12228 / FDA PCI 1200).